Reading from the N-terminus, the 290-residue chain is Bifunctional protein FolD (290 aa).

NADP(+) is bound by residues 169–171 (GAS), Ile-194, and Ile-235.

Belongs to the tetrahydrofolate dehydrogenase/cyclohydrolase family. In terms of assembly, homodimer.

The enzyme catalyses (6R)-5,10-methylene-5,6,7,8-tetrahydrofolate + NADP(+) = (6R)-5,10-methenyltetrahydrofolate + NADPH. The catalysed reaction is (6R)-5,10-methenyltetrahydrofolate + H2O = (6R)-10-formyltetrahydrofolate + H(+). It participates in one-carbon metabolism; tetrahydrofolate interconversion. Catalyzes the oxidation of 5,10-methylenetetrahydrofolate to 5,10-methenyltetrahydrofolate and then the hydrolysis of 5,10-methenyltetrahydrofolate to 10-formyltetrahydrofolate. This is Bifunctional protein FolD from Helicobacter pylori (strain HPAG1).